We begin with the raw amino-acid sequence, 148 residues long: Small ribosomal subunit protein eS19 (148 aa).

Belongs to the eukaryotic ribosomal protein eS19 family.

The sequence is that of Small ribosomal subunit protein eS19 (rps19) from Dictyostelium discoideum (Social amoeba).